The primary structure comprises 505 residues: Cytochrome P450 9b1 (505 aa).

Cys449 contacts heme.

This sequence belongs to the cytochrome P450 family. It depends on heme as a cofactor.

It localises to the endoplasmic reticulum membrane. The protein resides in the microsome membrane. In terms of biological role, may be involved in the metabolism of insect hormones and in the breakdown of synthetic insecticides. The sequence is that of Cytochrome P450 9b1 (Cyp9b1) from Drosophila melanogaster (Fruit fly).